The following is an 88-amino-acid chain: Small ribosomal subunit protein uS15 (88 aa).

Positions 1 to 20 (MLTTQDKQNIIKENQQSEGD) are enriched in polar residues. Residues 1–24 (MLTTQDKQNIIKENQQSEGDTGSP) are disordered.

Belongs to the universal ribosomal protein uS15 family. Part of the 30S ribosomal subunit. Forms a bridge to the 50S subunit in the 70S ribosome, contacting the 23S rRNA.

Functionally, one of the primary rRNA binding proteins, it binds directly to 16S rRNA where it helps nucleate assembly of the platform of the 30S subunit by binding and bridging several RNA helices of the 16S rRNA. In terms of biological role, forms an intersubunit bridge (bridge B4) with the 23S rRNA of the 50S subunit in the ribosome. The chain is Small ribosomal subunit protein uS15 from Francisella philomiragia subsp. philomiragia (strain ATCC 25017 / CCUG 19701 / FSC 153 / O#319-036).